A 430-amino-acid polypeptide reads, in one-letter code: Sesquiterpene synthase 15 (430 aa).

Mg(2+) contacts are provided by Asp-182, Asp-186, and Glu-335. The DDXXD motif motif lies at 182-186; it reads DDIYD.

This sequence belongs to the terpene synthase family. Tpsa subfamily. Mg(2+) is required as a cofactor. The cofactor is Mn(2+).

It functions in the pathway secondary metabolite biosynthesis; terpenoid biosynthesis. Its function is as follows. Sesquiterpene synthase involved in the biosynthesis of volatile compounds. No activity detected with geranyl diphosphate (GPP) and farnesyl diphosphate (FPP) as substrates. The chain is Sesquiterpene synthase 15 from Solanum lycopersicum (Tomato).